The primary structure comprises 492 residues: Transmembrane protein 104 homolog (492 aa).

The Cytoplasmic portion of the chain corresponds to 1-17; that stretch reads MQSNTDSSTSGTYSQTV. A helical membrane pass occupies residues 18–38; it reads GLLYVFNLIVGTGALALPKAF. At 39 to 44 the chain is on the extracellular side; that stretch reads QTAGWL. The helical transmembrane segment at 45–65 threads the bilayer; sequence LSITLLTFSAFMSYVAATFVI. The Cytoplasmic portion of the chain corresponds to 66–113; it reads EALSVANAVLSKKRRVEYDDVVVADGPSTFEISKKVEVSEMASMFLSK. The helical transmembrane segment at 114 to 134 threads the bilayer; the sequence is VSLVFSYFAIIIYLFGDLAIY. Residues 135–176 lie on the Extracellular side of the membrane; it reads STTVPKSAMNIVCATINASTVKSSDPCHESWPEILTRMTVYR. The N-linked (GlcNAc...) asparagine glycan is linked to N151. Residues 177–197 traverse the membrane as a helical segment; that stretch reads FFVIIFVVVVCLPMVIAGITK. At 198-209 the chain is on the cytoplasmic side; it reads TRHIQIMTTLSR. A helical transmembrane segment spans residues 210–230; sequence WAAFILMISLATMQLSSDGAA. The Extracellular segment spans residues 231-237; sequence AHPPAYN. Residues 238 to 258 form a helical membrane-spanning segment; the sequence is FHGFGSLFGCAVYAFMCHHSI. The Cytoplasmic segment spans residues 259 to 274; that stretch reads PSLITPMRTKDNVFGK. A helical membrane pass occupies residues 275-295; that stretch reads IALVYGVVGVFYFTLSLTGAF. The Extracellular segment spans residues 296 to 324; that stretch reads AFEHVQDIYTLNFFHDGNTSFIYSIIDYF. N313 carries N-linked (GlcNAc...) asparagine glycosylation. The helical transmembrane segment at 325–345 threads the bilayer; that stretch reads LALFPIITLTSSYPIIALTLI. Residues 346-392 lie on the Cytoplasmic side of the membrane; the sequence is NNFNVVKDILCPKVGQENESLLEADSLVEDNDTDDEREARNARNEKS. Residues 393–413 traverse the membrane as a helical segment; that stretch reads VFDVLVPALVLALPTFLSLLT. Topologically, residues 414-415 are extracellular; that stretch reads DD. The chain crosses the membrane as a helical span at residues 416–436; the sequence is MLLLASITGSFPGVAVQFAIP. Topologically, residues 437–466 are cytoplasmic; that stretch reads CLLVTAARKHARSVLNFPVPRKNNSPFQSP. A helical transmembrane segment spans residues 467–487; sequence IWIVLISSWAGFSMIMVLLNL. Residues 488-492 lie on the Extracellular side of the membrane; sequence VGVKF.

The protein belongs to the TMEM104 family.

It localises to the membrane. In Caenorhabditis elegans, this protein is Transmembrane protein 104 homolog.